The following is a 96-amino-acid chain: Phosphoribosyl-ATP pyrophosphatase (96 aa).

This sequence belongs to the PRA-PH family.

It localises to the cytoplasm. The catalysed reaction is 1-(5-phospho-beta-D-ribosyl)-ATP + H2O = 1-(5-phospho-beta-D-ribosyl)-5'-AMP + diphosphate + H(+). Its pathway is amino-acid biosynthesis; L-histidine biosynthesis; L-histidine from 5-phospho-alpha-D-ribose 1-diphosphate: step 2/9. This Methanococcus maripaludis (strain C5 / ATCC BAA-1333) protein is Phosphoribosyl-ATP pyrophosphatase.